The following is a 67-amino-acid chain: Large ribosomal subunit protein uL29 (67 aa).

It belongs to the universal ribosomal protein uL29 family.

The polypeptide is Large ribosomal subunit protein uL29 (Sorangium cellulosum (strain So ce56) (Polyangium cellulosum (strain So ce56))).